Reading from the N-terminus, the 111-residue chain is Small ribosomal subunit protein bS6 (111 aa).

Belongs to the bacterial ribosomal protein bS6 family.

In terms of biological role, binds together with bS18 to 16S ribosomal RNA. In Francisella tularensis subsp. tularensis (strain FSC 198), this protein is Small ribosomal subunit protein bS6.